Reading from the N-terminus, the 332-residue chain is Abl interactor homolog (332 aa).

Residues 73–104 adopt a coiled-coil conformation; the sequence is HITSLLQLQTNEMEKLNIEIQTLTQRVRMIHD. Residues 152-332 form a disordered region; that stretch reads SDINQNGVPP…NDFPPPPPPM (181 aa). Over residues 164-206 the composition is skewed to low complexity; it reads NHSNSSANLTSSSGHLAASSTSNSSTPSYQSPSYSSQPTISSG. Over residues 221-247 the composition is skewed to pro residues; that stretch reads APPPPSLSVPAAPPPPVMNVPPPPPTS. The span at 248–257 shows a compositional bias: polar residues; the sequence is QRPSSVNNNA. Positions 277–314 are enriched in pro residues; it reads LPPPPSFGLPPPPTLGDDFPPPPPPPVGSYDFPPPPAR.

This sequence belongs to the ABI family. In terms of assembly, part of a Scar/WAVE complex containing brk1, scrA, abiA, pirA and napA. Interacts with scrA.

Involved in regulation of actin and microtubule organization. Required for proper cytokinesis. The sequence is that of Abl interactor homolog (abiA) from Dictyostelium discoideum (Social amoeba).